Here is a 136-residue protein sequence, read N- to C-terminus: uncharacterized protein (136 aa).

A disordered region spans residues Met1 to Arg51. Basic and acidic residues predominate over residues Gln37–Ser46.

This is an uncharacterized protein from Homo sapiens (Human).